We begin with the raw amino-acid sequence, 638 residues long: 1-deoxy-D-xylulose-5-phosphate synthase (638 aa).

Thiamine diphosphate is bound by residues histidine 71 and 112–114; that span reads SHA. Residue aspartate 144 participates in Mg(2+) binding. Thiamine diphosphate contacts are provided by residues 145–146, asparagine 173, tyrosine 284, and glutamate 365; that span reads GA. Residue asparagine 173 coordinates Mg(2+).

Belongs to the transketolase family. DXPS subfamily. Homodimer. The cofactor is Mg(2+). Thiamine diphosphate is required as a cofactor.

The enzyme catalyses D-glyceraldehyde 3-phosphate + pyruvate + H(+) = 1-deoxy-D-xylulose 5-phosphate + CO2. Its pathway is metabolic intermediate biosynthesis; 1-deoxy-D-xylulose 5-phosphate biosynthesis; 1-deoxy-D-xylulose 5-phosphate from D-glyceraldehyde 3-phosphate and pyruvate: step 1/1. In terms of biological role, catalyzes the acyloin condensation reaction between C atoms 2 and 3 of pyruvate and glyceraldehyde 3-phosphate to yield 1-deoxy-D-xylulose-5-phosphate (DXP). The protein is 1-deoxy-D-xylulose-5-phosphate synthase of Mycobacterium sp. (strain KMS).